We begin with the raw amino-acid sequence, 450 residues long: Cytidylate cyclase (450 aa).

Positions 97-236 constitute a Guanylate cyclase domain; that stretch reads VTMFVDIRKS…LPVDMTAKLQ (140 aa). F100 is an a ribonucleoside 5'-triphosphate binding site. Residues D102, I103, and D146 each contribute to the Mn(2+) site. Positions 318–450 are AGS-C domain; sequence PNQFNFECFV…YRNIIGVYIK (133 aa).

This sequence belongs to the adenylyl cyclase class-4/guanylyl cyclase family. Pyrimidine cyclase subfamily. In terms of assembly, homodimer. The cofactor is Mn(2+).

The protein localises to the cytoplasm. It catalyses the reaction CTP = 3',5'-cyclic CMP + diphosphate. In E.coli strain MG1655 transformed with both genes cCMP appears between 15 and 30 minutes after infection with phage T5 (at protein level). No cCMP accumulates in uninfected cells. Pycsar (pyrimidine cyclase system for antiphage resistance) provides immunity against bacteriophage. The pyrimidine cyclase (PycC) synthesizes cyclic nucleotides in response to infection; these serve as specific second messenger signals. The signal activates the adjacent effector, leading to bacterial cell death and abortive phage infection. A clade E Pycsar system. Functionally, the pyrimidine cyclase gene of a two-gene Pycsar system, generates cyclic CMP (cCMP) from CTP in response to bacteriophage infection. Has little to no activity on ATP, GTP or UTP. Expression of this and adjacent effector EcPycTM (AC P0DV25) confers resistance to bacteriophage P1 and T5; expression of this gene alone does not confer resistance. When cells expressing the Pycsar system are infected by phage T5 at low multiplicity of infection (0.2 MOI) the culture survives, at 2.0 MOI bacteria enter growth arrest. The same cells enter growth arrest after exposure to 250 uM cCMP but not cUMP; thus the effector protein responds only to the cNMP produced by its cognate NTP cyclase. Some of the cells treated with cCMP have abnormal membrane protrusions. The chain is Cytidylate cyclase from Escherichia coli.